Consider the following 268-residue polypeptide: Protein CDV3 homolog (268 aa).

Basic and acidic residues predominate over residues 40–50; that stretch reads KREVVKPKKPE. 2 disordered regions span residues 40–145 and 184–268; these read KREV…ERVG and QQAG…DEAS. Low complexity predominate over residues 51–61; that stretch reads AAAGGVAVVGE. Residues 76–85 are compositionally biased toward acidic residues; the sequence is VEEEWKEFEE. Residues 98-107 are compositionally biased toward polar residues; it reads QLSTITAQES. Acidic residues predominate over residues 123–132; sequence NYDEDDEDSN. Basic and acidic residues predominate over residues 221 to 239; it reads RPEEQRKKKNEPAFEEVRH.

It belongs to the CDV3 family.

In Drosophila yakuba (Fruit fly), this protein is Protein CDV3 homolog.